Consider the following 181-residue polypeptide: Ribulose bisphosphate carboxylase small subunit, chloroplastic 2 (181 aa).

Residues 1–57 (MASSVISSAAVATRTNVTQAGSMIAPFTGLKSAATFPVSRKQNLDITSIASNGGRVR) constitute a chloroplast transit peptide.

It belongs to the RuBisCO small chain family. In terms of assembly, heterohexadecamer of 8 large and 8 small subunits.

The protein localises to the plastid. The protein resides in the chloroplast. Functionally, ruBisCO catalyzes two reactions: the carboxylation of D-ribulose 1,5-bisphosphate, the primary event in carbon dioxide fixation, as well as the oxidative fragmentation of the pentose substrate. Both reactions occur simultaneously and in competition at the same active site. Although the small subunit is not catalytic it is essential for maximal activity. This is Ribulose bisphosphate carboxylase small subunit, chloroplastic 2 from Solanum tuberosum (Potato).